The chain runs to 504 residues: Tegument protein VP16 homolog (504 aa).

Disordered stretches follow at residues 354–381 (EAGGGWRRSGSTRTRGRAARSTTGRLQR), 395–421 (ATPRQRLRARGEPRHTSGSGAFSQGRR), and 435–486 (RSGP…ANPF). A compositionally biased stretch (low complexity) spans 361–378 (RSGSTRTRGRAARSTTGR). Residues 447 to 460 (PVRSGLGLSRARGS) show a composition bias toward low complexity.

The protein belongs to the herpesviridae tegument protein VP16 protein family. Associates with the VP16-induced complex; binding to host HCFC1 activates VP16 for association with the octamer motif-binding host protein POU2F1, to form a multiprotein-DNA complex responsible for activating transcription of the viral immediate early genes.

The protein localises to the virion tegument. The protein resides in the host nucleus. In terms of biological role, transcriptional activator of immediate-early (IE) gene products (alpha genes). Acts as a key activator of lytic infection by initiating the lytic program through the assembly of the transcriptional regulatory VP16-induced complex composed of VP16 and two cellular factors, HCFC1 and POU2F1. VP16-induced complex represents a regulatory switch: when it is on, it promotes IE-gene expression and thus lytic infection, and when it is off, it limits IE-gene transcription favoring latent infection. Functionally, may play a role in the aggregation of tegument proteins around nucleocapsids during virus morphogenesis. In Bos taurus (Bovine), this protein is Tegument protein VP16 homolog.